Consider the following 314-residue polypeptide: NF-kappa-B inhibitor alpha (314 aa).

Residues 1–41 are disordered; it reads MFQPAEPGQEWAMEGPRDALKKERLLDDRHDSGLDSMKDEE. The span at 15–41 shows a compositional bias: basic and acidic residues; sequence GPRDALKKERLLDDRHDSGLDSMKDEE. A Glycyl lysine isopeptide (Lys-Gly) (interchain with G-Cter in SUMO); alternate cross-link involves residue K21. K21 is covalently cross-linked (Glycyl lysine isopeptide (Lys-Gly) (interchain with G-Cter in ubiquitin); alternate). K22 participates in a covalent cross-link: Glycyl lysine isopeptide (Lys-Gly) (interchain with G-Cter in ubiquitin). Positions 30 to 36 match the Destruction motif motif; sequence HDSGLDS. A Phosphoserine; by IKKA and IKKB modification is found at S32. S36 bears the Phosphoserine; by IKKA, IKKB, IKKE and TBK1 mark. Position 42 is a phosphotyrosine; by Tyr-kinases (Y42). Positions 45 to 54 match the Nuclear export signal motif; sequence MVKELREIRL. Residues 110-120 carry the Nuclear import signal motif; it reads LQQTPLHLAVI. 4 ANK repeats span residues 110-139, 143-172, 182-211, and 216-245; these read LQQT…DPEL, RGNT…TQHL, NGHT…DVNA, and NGRT…DVNR. 2 positions are modified to (3S)-3-hydroxyasparagine; by HIF1AN: N210 and N244. Phosphoserine; by CK2 is present on residues S283 and S288. T291 bears the Phosphothreonine; by CK2 mark. Position 293 is a phosphoserine; by CK2 (S293). T296 carries the phosphothreonine modification.

The protein belongs to the NF-kappa-B inhibitor family. Interacts with RELA; the interaction requires the nuclear import signal. Part of a 70-90 kDa complex at least consisting of CHUK, IKBKB, NFKBIA, RELA, ELP1 and MAP3K14. Interacts with NKIRAS1 and NKIRAS2. Interacts with RWDD3; the interaction enhances sumoylation. Interacts with PRMT2. Interacts with PRKACA in platelets; this interaction is disrupted by thrombin and collagen. Interacts with MEFV. Interacts with DDRGK1; positively regulates NFKBIA phosphorylation and degradation. Interacts with HNRNPA2B1; the interaction may be mediated by the RRM2 domain of HNRNPA2B1, and HNRNPA2B1 may interact simultaneously with FAM76B and either NFKBIA or NFKBIE to form a complex. Post-translationally, phosphorylated at Ser-32 and Ser-36 by IKKA/CHUK and IKKB/IKBKB; disables inhibition of NF-kappa-B DNA-binding activity. Phosphorylation at positions 32 and 36 is prerequisite to recognition by the SCF(FBXW11) and SCF(BTRC) complexes, leading to polyubiquitination and subsequent degradation. Polyubiquitinated at Lys-21 and/or Lys-22 following phosphorylation at Ser-32 and Ser-36. Monoubiquitinated at Lys-21 and/or Lys-22 by UBE2D3. Ubiquitin chain elongation is then performed by CDC34 in cooperation with the SCF(FBXW11) E3 ligase complex, building ubiquitin chains from the UBE2D3-primed NFKBIA-linked ubiquitin. The resulting polyubiquitination leads to protein degradation. Also ubiquitinated by the SCF(BTRC) complex following stimulus-dependent phosphorylation at Ser-32 and Ser-36. Deubiquitinated by USP38, leading to NF-kappa-B inhibition. In terms of processing, sumoylated; sumoylation requires the presence of the nuclear import signal. Sumoylation blocks ubiquitination and proteasome-mediated degradation of the protein thereby increasing the protein stability. Post-translationally, hydroxylated by HIF1AN.

The protein resides in the cytoplasm. It localises to the nucleus. Inhibits the activity of dimeric NF-kappa-B/REL complexes by trapping REL (RELA/p65 and NFKB1/p50) dimers in the cytoplasm by masking their nuclear localization signals. On cellular stimulation by immune and pro-inflammatory responses, becomes phosphorylated promoting ubiquitination and degradation, enabling the dimeric RELA to translocate to the nucleus and activate transcription. This chain is NF-kappa-B inhibitor alpha (NFKBIA), found in Sus scrofa (Pig).